The chain runs to 296 residues: Light-independent protochlorophyllide reductase iron-sulfur ATP-binding protein (296 aa).

ATP contacts are provided by residues 39–44 and K68; that span reads GIGKST. Mg(2+) is bound at residue S43. Positions 124 and 158 each coordinate [4Fe-4S] cluster. 209–210 contributes to the ATP binding site; sequence NR.

It belongs to the NifH/BchL/ChlL family. Homodimer. Protochlorophyllide reductase is composed of three subunits; ChlL, ChlN and ChlB. It depends on [4Fe-4S] cluster as a cofactor.

It carries out the reaction chlorophyllide a + oxidized 2[4Fe-4S]-[ferredoxin] + 2 ADP + 2 phosphate = protochlorophyllide a + reduced 2[4Fe-4S]-[ferredoxin] + 2 ATP + 2 H2O. Its pathway is porphyrin-containing compound metabolism; chlorophyll biosynthesis (light-independent). Functionally, component of the dark-operative protochlorophyllide reductase (DPOR) that uses Mg-ATP and reduced ferredoxin to reduce ring D of protochlorophyllide (Pchlide) to form chlorophyllide a (Chlide). This reaction is light-independent. The L component serves as a unique electron donor to the NB-component of the complex, and binds Mg-ATP. This Prochlorococcus marinus (strain SARG / CCMP1375 / SS120) protein is Light-independent protochlorophyllide reductase iron-sulfur ATP-binding protein.